A 222-amino-acid polypeptide reads, in one-letter code: Putative O-methyltransferase MAV_1364 (222 aa).

S-adenosyl-L-methionine-binding positions include V49, E71, 73 to 74, S79, D97, and I98; that span reads GT. Substrate is bound at residue D145. D147 provides a ligand contact to S-adenosyl-L-methionine.

This sequence belongs to the class I-like SAM-binding methyltransferase superfamily. Cation-dependent O-methyltransferase family.

This Mycobacterium avium (strain 104) protein is Putative O-methyltransferase MAV_1364.